A 342-amino-acid chain; its full sequence is Tetraacyldisaccharide 4'-kinase (342 aa).

68 to 75 (TVGGTGKT) contacts ATP.

Belongs to the LpxK family.

It carries out the reaction a lipid A disaccharide + ATP = a lipid IVA + ADP + H(+). It functions in the pathway glycolipid biosynthesis; lipid IV(A) biosynthesis; lipid IV(A) from (3R)-3-hydroxytetradecanoyl-[acyl-carrier-protein] and UDP-N-acetyl-alpha-D-glucosamine: step 6/6. In terms of biological role, transfers the gamma-phosphate of ATP to the 4'-position of a tetraacyldisaccharide 1-phosphate intermediate (termed DS-1-P) to form tetraacyldisaccharide 1,4'-bis-phosphate (lipid IVA). In Burkholderia thailandensis (strain ATCC 700388 / DSM 13276 / CCUG 48851 / CIP 106301 / E264), this protein is Tetraacyldisaccharide 4'-kinase.